The primary structure comprises 93 residues: Putative sodium channel toxin Ts41 (93 aa).

A signal peptide spans 1 to 23 (MKIGVLFTIISMLCLLEVRKICS). Intrachain disulfides connect C22/C87, C39/C62, C48/C67, and C52/C69. Residues 26–88 (EGGYPRYFSF…FWNVYRKYCK (63 aa)) form the LCN-type CS-alpha/beta domain.

It belongs to the long (4 C-C) scorpion toxin superfamily. In terms of tissue distribution, expressed by the venom gland.

Its subcellular location is the secreted. Functionally, the edited BmKBTx-like may modulate voltage-gated sodium channels (Nav). Its function is as follows. The non-edited form is able to form a heterodimer. In orthologs, a heterodimer with LVP beta-chain induces lipolysis in rat adipocytes, which is mediated through the beta-2 adrenergic receptor pathway (ADRB2). Since no LVP beta-chains have been identified in the venom of this scorpion, it is possible that this protein is not involved in a lipolysis process. This is Putative sodium channel toxin Ts41 from Tityus serrulatus (Brazilian scorpion).